The chain runs to 478 residues: Kynureninase (478 aa).

Residues L138, T139, 166-169 (FPSD), D252, H255, and Y277 contribute to the pyridoxal 5'-phosphate site. An N6-(pyridoxal phosphate)lysine modification is found at K278. W315 and N343 together coordinate pyridoxal 5'-phosphate.

This sequence belongs to the kynureninase family. In terms of assembly, homodimer. Pyridoxal 5'-phosphate is required as a cofactor.

It is found in the cytoplasm. The catalysed reaction is L-kynurenine + H2O = anthranilate + L-alanine + H(+). It catalyses the reaction 3-hydroxy-L-kynurenine + H2O = 3-hydroxyanthranilate + L-alanine + H(+). Its pathway is amino-acid degradation; L-kynurenine degradation; L-alanine and anthranilate from L-kynurenine: step 1/1. It functions in the pathway cofactor biosynthesis; NAD(+) biosynthesis; quinolinate from L-kynurenine: step 2/3. Functionally, catalyzes the cleavage of L-kynurenine (L-Kyn) and L-3-hydroxykynurenine (L-3OHKyn) into anthranilic acid (AA) and 3-hydroxyanthranilic acid (3-OHAA), respectively. This Coccidioides immitis (strain RS) (Valley fever fungus) protein is Kynureninase.